A 323-amino-acid chain; its full sequence is Methionyl-tRNA formyltransferase (323 aa).

Residue 118-121 (SLLP) participates in (6S)-5,6,7,8-tetrahydrofolate binding.

Belongs to the Fmt family.

The catalysed reaction is L-methionyl-tRNA(fMet) + (6R)-10-formyltetrahydrofolate = N-formyl-L-methionyl-tRNA(fMet) + (6S)-5,6,7,8-tetrahydrofolate + H(+). Attaches a formyl group to the free amino group of methionyl-tRNA(fMet). The formyl group appears to play a dual role in the initiator identity of N-formylmethionyl-tRNA by promoting its recognition by IF2 and preventing the misappropriation of this tRNA by the elongation apparatus. The protein is Methionyl-tRNA formyltransferase of Buchnera aphidicola subsp. Baizongia pistaciae (strain Bp).